Consider the following 309-residue polypeptide: Nucleoside kinase (309 aa).

Positions 16, 42, and 46 each coordinate substrate. Position 108 (Q108) interacts with ATP. Residues 110–112 (SYF) and Q166 contribute to the substrate site. ATP contacts are provided by residues N189 and 217-223 (KTYGKEG). D249 contributes to the substrate binding site. Catalysis depends on D249, which acts as the Proton acceptor.

This sequence belongs to the carbohydrate kinase PfkB family. In terms of assembly, homodimer. It depends on Mg(2+) as a cofactor.

Functionally, catalyzes the phosphorylation of a wide range of nucleosides to yield nucleoside monophosphates, using ATP, ITP or GTP as phosphate donor. This chain is Nucleoside kinase, found in Methanothermobacter thermautotrophicus (strain ATCC 29096 / DSM 1053 / JCM 10044 / NBRC 100330 / Delta H) (Methanobacterium thermoautotrophicum).